The sequence spans 189 residues: Interferon alpha-B (189 aa).

An N-terminal signal peptide occupies residues 1–23 (MAPAWSFLLALLLLSCNAICSLG). 2 disulfides stabilise this stretch: Cys24-Cys122 and Cys52-Cys162.

Belongs to the alpha/beta interferon family.

Its subcellular location is the secreted. Functionally, produced by macrophages, IFN-alpha have antiviral activities. Interferon stimulates the production of two enzymes: a protein kinase and an oligoadenylate synthetase. In Bos taurus (Bovine), this protein is Interferon alpha-B (IFNAB).